The following is a 572-amino-acid chain: MANLSFTENGDKAYNTSGSACIDFFVRITRSSQLTDYISTFGKAWNEDKNIAMKILYNLRDIRTGKGEKIIPVAIMTYLKFHLNSDIYNSIVTDFVTMYGCWKDLLKIVEIETRFRLSTPSVSNKNINPIEIKLFADQLQKDFDTVNNNTGSSKVAISLCAKWAPSEKQHYNKAPLLIADSIRSQMGLTPRQYRKMLTKLRSHLQVLEMLMSTHQYDKIDFSKLPSVALMKMKNAFNRDTNSQGIKSDFRVNLHTSYTKYLQDLSKGKTKVNTKGIQPHELVGQYLSSSDFDQLVESQWDAIKKGVSDSGTFNNVTAVVDVSGSMHGQPMQVAIALGILVAECTSGPYHGRVITFHEKPSWHHLTGSNLMEKVKCMRDAPWGGSTNMKSVFDLVLQNAINAKLKPHEMIDTLFIFTDMQFNQCDCSGLESTFEYGQRKFTEAGYTFPKVVCWNLRTSNSKSLPLMKNDEGYVMLSGFSAELLKCIMNAEEFNPMSMLLHVLEPYVLNPVFINSETVDINSIIDDESNKNNFNKAVERSKFKKAYKKSSNTNSTTNSMNPRRSTVSSEDWVLN.

Residues 543-572 form a disordered region; sequence AYKKSSNTNSTTNSMNPRRSTVSSEDWVLN. Low complexity predominate over residues 547-563; sequence SSNTNSTTNSMNPRRST.

This is an uncharacterized protein from Acanthamoeba polyphaga (Amoeba).